The primary structure comprises 141 residues: Putative nickel-responsive regulator (141 aa).

The Ni(2+) site is built by His-80, His-91, His-93, and Cys-99.

This sequence belongs to the transcriptional regulatory CopG/NikR family. As to quaternary structure, homotetramer. Ni(2+) is required as a cofactor.

In terms of biological role, transcriptional regulator. The protein is Putative nickel-responsive regulator of Methanocaldococcus jannaschii (strain ATCC 43067 / DSM 2661 / JAL-1 / JCM 10045 / NBRC 100440) (Methanococcus jannaschii).